The chain runs to 118 residues: Large ribosomal subunit protein uL22c (118 aa).

The protein belongs to the universal ribosomal protein uL22 family. Part of the 50S ribosomal subunit.

Its subcellular location is the plastid. It localises to the organellar chromatophore. Its function is as follows. This protein binds specifically to 23S rRNA. The globular domain of the protein is located near the polypeptide exit tunnel on the outside of the subunit, while an extended beta-hairpin is found that lines the wall of the exit tunnel in the center of the 70S ribosome. This Paulinella chromatophora protein is Large ribosomal subunit protein uL22c (rpl22).